A 521-amino-acid chain; its full sequence is U4/U6 small nuclear ribonucleoprotein Prp4 (521 aa).

Lys26 is subject to N6-acetyllysine. WD repeat units lie at residues 229 to 268, 271 to 318, 321 to 360, 363 to 402, 405 to 444, 447 to 487, and 490 to 521; these read DDRP…LHTL, HNTN…VADI, HTVR…ILHQ, HSMG…IMFL, HLKE…VYTI, HQNL…LKTL, and HEGK…WMAE.

In terms of assembly, component of the precatalytic spliceosome (spliceosome B complex). Component of the U4/U6-U5 tri-snRNP complex, a building block of the precatalytic spliceosome (spliceosome B complex). The U4/U6-U5 tri-snRNP complex is composed of the U4, U6 and U5 snRNAs and at least PRPF3, PRPF4, PRPF6, PRPF8, PRPF31, SNRNP200, TXNL4A, SNRNP40, SNRPB, SNRPD1, SNRPD2, SNRPD3, SNRPE, SNRPF, SNRPG, DDX23, CD2BP2, PPIH, SNU13, EFTUD2, SART1 and USP39, plus LSM2, LSM3, LSM4, LSM5, LSM6, LSM7 and LSM8. Interacts directly with PRPF18, PPIH and PRPF3. Part of a heteromeric complex containing PPIH, PRPF3 and PRPF4 that is stable in the absence of RNA. Interacts with ERCC6.

It is found in the nucleus. It localises to the nucleus speckle. Functionally, plays a role in pre-mRNA splicing as component of the U4/U6-U5 tri-snRNP complex that is involved in spliceosome assembly, and as component of the precatalytic spliceosome (spliceosome B complex). This chain is U4/U6 small nuclear ribonucleoprotein Prp4 (PRPF4), found in Bos taurus (Bovine).